A 285-amino-acid chain; its full sequence is Glutamate racemase (285 aa).

Residues 28 to 29 (DS) and 60 to 61 (YG) each bind substrate. Catalysis depends on C92, which acts as the Proton donor/acceptor. Substrate is bound at residue 93 to 94 (NT). C204 (proton donor/acceptor) is an active-site residue. 205–206 (TH) provides a ligand contact to substrate.

Belongs to the aspartate/glutamate racemases family.

It carries out the reaction L-glutamate = D-glutamate. It participates in cell wall biogenesis; peptidoglycan biosynthesis. In terms of biological role, provides the (R)-glutamate required for cell wall biosynthesis. The sequence is that of Glutamate racemase from Escherichia coli O6:H1 (strain CFT073 / ATCC 700928 / UPEC).